The primary structure comprises 444 residues: Phosphoglucosamine mutase (444 aa).

S104 acts as the Phosphoserine intermediate in catalysis. Positions 104, 243, 245, and 247 each coordinate Mg(2+). S104 is modified (phosphoserine).

The protein belongs to the phosphohexose mutase family. The cofactor is Mg(2+). Activated by phosphorylation.

The enzyme catalyses alpha-D-glucosamine 1-phosphate = D-glucosamine 6-phosphate. In terms of biological role, catalyzes the conversion of glucosamine-6-phosphate to glucosamine-1-phosphate. The protein is Phosphoglucosamine mutase of Neisseria meningitidis serogroup C (strain 053442).